The primary structure comprises 327 residues: BarH-like 1 homeobox protein (327 aa).

3 disordered regions span residues 1 to 90 (MEGS…AQSR), 113 to 181 (PYSS…PRKA), and 303 to 327 (LQGA…AQPR). The span at 33–54 (RSPLELSPRSESSSDCSSPASP) shows a compositional bias: low complexity. Over residues 79 to 90 (QPGQLSAPAQSR) the composition is skewed to polar residues. Composition is skewed to basic and acidic residues over residues 133 to 143 (AGEDFRDKLDK) and 152 to 166 (SEYK…EISS). The segment at residues 178–237 (PRKARTAFTDHQLAQLERSFERQKYLSVQDRMELAASLNLTDTQVKTWYQNRRTKWKRQT) is a DNA-binding region (homeobox). The span at 308-318 (EPPPPLPPLPG) shows a compositional bias: pro residues.

Belongs to the BAR homeobox family.

It localises to the nucleus. This chain is BarH-like 1 homeobox protein (Barhl1), found in Mus musculus (Mouse).